A 118-amino-acid polypeptide reads, in one-letter code: Basic phospholipase A2 PA-13 (118 aa).

7 cysteine pairs are disulfide-bonded: Cys-11–Cys-71, Cys-27–Cys-117, Cys-29–Cys-45, Cys-44–Cys-98, Cys-51–Cys-91, Cys-60–Cys-84, and Cys-78–Cys-89. Residues Tyr-28, Gly-30, and Gly-32 each coordinate Ca(2+). His-48 is an active-site residue. Residue Asp-49 participates in Ca(2+) binding. Asp-92 is a catalytic residue.

Belongs to the phospholipase A2 family. Group I subfamily. D49 sub-subfamily. It depends on Ca(2+) as a cofactor. In terms of tissue distribution, expressed by the venom gland.

It localises to the secreted. The catalysed reaction is a 1,2-diacyl-sn-glycero-3-phosphocholine + H2O = a 1-acyl-sn-glycero-3-phosphocholine + a fatty acid + H(+). Its function is as follows. PLA2 catalyzes the calcium-dependent hydrolysis of the 2-acyl groups in 3-sn-phosphoglycerides. In Pseudechis australis (Mulga snake), this protein is Basic phospholipase A2 PA-13.